The chain runs to 68 residues: MKKIKLKTKSSVKKRFHLTAKGKVISTQSGKRHGMVKRSKSNIRNQRGTTILGKSDSRIVKLHMPYGI.

This sequence belongs to the bacterial ribosomal protein bL35 family.

The polypeptide is Large ribosomal subunit protein bL35 (Wolbachia pipientis wMel).